The sequence spans 529 residues: UDP-glucuronosyltransferase 2B28 (529 aa).

The signal sequence occupies residues 1 to 24 (MALKWTSVLLLIHLGCYFSSGSCG). An N6-succinyllysine modification is found at K135. N315 is a glycosylation site (N-linked (GlcNAc...) asparagine). A helical membrane pass occupies residues 495–517 (GFLLACVATVIFVVTKFCLFCFW).

This sequence belongs to the UDP-glycosyltransferase family. As to expression, expressed in the liver, breast and kidney.

It localises to the endoplasmic reticulum membrane. The protein localises to the cytoplasm. The protein resides in the perinuclear region. The enzyme catalyses glucuronate acceptor + UDP-alpha-D-glucuronate = acceptor beta-D-glucuronoside + UDP + H(+). Its function is as follows. UDP-glucuronosyltransferase (UGT) that catalyzes phase II biotransformation reactions in which lipophilic substrates are conjugated with glucuronic acid to increase the metabolite's water solubility, thereby facilitating excretion into either the urine or bile. Essential for the elimination and detoxification of drugs, xenobiotics and endogenous compounds. Catalyzes the glucuronidation of endogenous steroid hormones such as androgens (androsterone, 3alpha-androstanediol) and estrogens (estradiol, estrone). Catalyzes the glucuronidation of bile acid substrates, which are natural detergents for dietary lipids absorption. Displays glucuronidation activity toward the phenolic compounds eugenol. Functionally, lack UDP-glucuronosyltransferase (UGT) activity. The polypeptide is UDP-glucuronosyltransferase 2B28 (Homo sapiens (Human)).